Consider the following 207-residue polypeptide: Uridine kinase (207 aa).

Residue 11–18 (GGSGSGKT) participates in ATP binding.

Belongs to the uridine kinase family.

The protein resides in the cytoplasm. The catalysed reaction is uridine + ATP = UMP + ADP + H(+). The enzyme catalyses cytidine + ATP = CMP + ADP + H(+). It participates in pyrimidine metabolism; CTP biosynthesis via salvage pathway; CTP from cytidine: step 1/3. Its pathway is pyrimidine metabolism; UMP biosynthesis via salvage pathway; UMP from uridine: step 1/1. This Staphylococcus haemolyticus (strain JCSC1435) protein is Uridine kinase.